Here is a 97-residue protein sequence, read N- to C-terminus: Large ribosomal subunit protein bL27 (97 aa).

Positions 1 to 12 are excised as a propeptide; sequence MLKMNLANLQLF. Residues 14-38 form a disordered region; that stretch reads HKKGGGSTSNGRDSESKRLGAKAAD.

It belongs to the bacterial ribosomal protein bL27 family. In terms of processing, the N-terminus is cleaved by ribosomal processing cysteine protease Prp.

This Streptococcus mutans serotype c (strain ATCC 700610 / UA159) protein is Large ribosomal subunit protein bL27.